Reading from the N-terminus, the 354-residue chain is Stimulator of interferon genes protein 3 (354 aa).

Helical transmembrane passes span 20–40, 48–68, 101–121, and 132–152; these read VTFA…FALW, INFV…GELI, YGSC…YALL, and YGIF…IVGI. 3',3'-cGAMP contacts are provided by Asn-178, Tyr-183, Arg-250, Ile-251, Lys-253, Glu-272, Ser-275, and Asn-276.

Belongs to the STING family.

Its subcellular location is the membrane. Facilitator of innate immune signaling that acts as a sensor of second messenger signals produced by cyclic GMP-AMP synthase-like receptors (cGLRs) and promotes the production of type I interferon. Innate immune response is triggered in response to nucleotides from viruses and bacteria delivered to the cytoplasm. Acts by binding cyclic dinucleotides: recognizes and binds cyclic 3'-3' linked cGAMP (3'-3'-cGAMP), cyclic di-AMP (3',3'-c-di-AMP) and cyclic di-GMP (3',3'-c-di-GMP) second messengers produced by cGLRs in response to nucleotides in the cytosol, such as double-stranded RNA (dsRNA). Upon binding to 3'-3'-cGAMP, 3',3'-c-di-AMP or 3',3'-c-di-GMP, oligomerizes and promotes the recruitment and subsequent activation of the transcription factor IRF3 to induce expression of type I interferon. The polypeptide is Stimulator of interferon genes protein 3 (Stylophora pistillata (Smooth cauliflower coral)).